A 156-amino-acid polypeptide reads, in one-letter code: Small ribosomal subunit protein uS7 (156 aa).

Belongs to the universal ribosomal protein uS7 family. As to quaternary structure, part of the 30S ribosomal subunit. Contacts proteins S9 and S11.

One of the primary rRNA binding proteins, it binds directly to 16S rRNA where it nucleates assembly of the head domain of the 30S subunit. Is located at the subunit interface close to the decoding center, probably blocks exit of the E-site tRNA. This Clavibacter sepedonicus (Clavibacter michiganensis subsp. sepedonicus) protein is Small ribosomal subunit protein uS7.